We begin with the raw amino-acid sequence, 469 residues long: Cell division protein FtsP (469 aa).

Residues 1–27 (MKLSRRQFLQRSTLAGVATVTPTSLWA) constitute a signal peptide (tat-type signal).

It belongs to the FtsP family. Predicted to be exported by the Tat system. The position of the signal peptide cleavage has not been experimentally proven.

Its subcellular location is the periplasm. Its function is as follows. Cell division protein that is required for growth during stress conditions. May be involved in protecting or stabilizing the divisomal assembly under conditions of stress. In Glaesserella parasuis serovar 5 (strain SH0165) (Haemophilus parasuis), this protein is Cell division protein FtsP.